Consider the following 476-residue polypeptide: Ribosomal RNA small subunit methyltransferase F (476 aa).

S-adenosyl-L-methionine contacts are provided by residues 124–130, Glu-148, Asp-175, and Asp-193; that span reads ASAPGSK. The active-site Nucleophile is the Cys-246.

The protein belongs to the class I-like SAM-binding methyltransferase superfamily. RsmB/NOP family.

The protein localises to the cytoplasm. The catalysed reaction is cytidine(1407) in 16S rRNA + S-adenosyl-L-methionine = 5-methylcytidine(1407) in 16S rRNA + S-adenosyl-L-homocysteine + H(+). Specifically methylates the cytosine at position 1407 (m5C1407) of 16S rRNA. The polypeptide is Ribosomal RNA small subunit methyltransferase F (Photobacterium profundum (strain SS9)).